The primary structure comprises 380 residues: METNLLLVKCVLLASCLIHPRACSPSCNFPAIFNFGDSNSDTGGLSASFGQAPYPNGQTFFHSPSGRFSDGRLIIDFIAEELGLPYLNAFLDSIGSNFSHGANFATAGSTVRPPNATIAQSGVSPISLDVQLVQFSDFITRSQLIRNRGGVFKKLLPKKEYFSQALYTFDIGQNDLTAGLKLNMTSDQIKAYIPDVHDQLSNVIRKVYSKGGRRFWIHNTAPLGCLPYVLDRFPVPASQIDNHGCAIPRNEIARYYNSELKRRVIELRKELSEAAFTYVDIYSIKLTLITQAKKLGFRYPLVACCGHGGKYNFNKLIKCGAKVMIKGKEIVLAKSCNDVSFRVSWDGIHFTETTNSWIFQQINDGAFSDPPLPVKSACTR.

Residues Met-1–Pro-25 form the signal peptide. The active-site Nucleophile is Ser-38. N-linked (GlcNAc...) asparagine glycosylation is found at Asn-97, Asn-115, and Asn-183. Catalysis depends on residues Asp-346 and His-349.

Belongs to the 'GDSL' lipolytic enzyme family.

It localises to the secreted. It carries out the reaction hexadecanoate ester + H2O = an aliphatic alcohol + hexadecanoate + H(+). It catalyses the reaction a butanoate ester + H2O = an aliphatic alcohol + butanoate + H(+). With respect to regulation, lipase activity is inhibited by phenylmethylsulfonyl fluoride (PMSF), but not neostigmine bromide (NB). Lipase that can hydrolyze p-nitrophenyl butyrate and p-nitrophenyl palmitate in vitro. Possesses low activity against p-nitrophenyl acetate. Substrate preference is p-nitrophenyl palmitate &gt; p-nitrophenyl butyrate &gt;&gt; p-nitrophenyl acetate. Lacks cholinesterase activity. This chain is GDSL esterase/lipase At3g26430, found in Arabidopsis thaliana (Mouse-ear cress).